Reading from the N-terminus, the 355-residue chain is UDP-N-acetylglucosamine--N-acetylmuramyl-(pentapeptide) pyrophosphoryl-undecaprenol N-acetylglucosamine transferase (355 aa).

UDP-N-acetyl-alpha-D-glucosamine-binding positions include 15-17 (TGG), Asn127, Arg163, Ser191, Ile244, 263-268 (ALTVSE), and Gln288.

This sequence belongs to the glycosyltransferase 28 family. MurG subfamily.

It is found in the cell inner membrane. The enzyme catalyses di-trans,octa-cis-undecaprenyl diphospho-N-acetyl-alpha-D-muramoyl-L-alanyl-D-glutamyl-meso-2,6-diaminopimeloyl-D-alanyl-D-alanine + UDP-N-acetyl-alpha-D-glucosamine = di-trans,octa-cis-undecaprenyl diphospho-[N-acetyl-alpha-D-glucosaminyl-(1-&gt;4)]-N-acetyl-alpha-D-muramoyl-L-alanyl-D-glutamyl-meso-2,6-diaminopimeloyl-D-alanyl-D-alanine + UDP + H(+). It participates in cell wall biogenesis; peptidoglycan biosynthesis. Its function is as follows. Cell wall formation. Catalyzes the transfer of a GlcNAc subunit on undecaprenyl-pyrophosphoryl-MurNAc-pentapeptide (lipid intermediate I) to form undecaprenyl-pyrophosphoryl-MurNAc-(pentapeptide)GlcNAc (lipid intermediate II). In Salmonella newport (strain SL254), this protein is UDP-N-acetylglucosamine--N-acetylmuramyl-(pentapeptide) pyrophosphoryl-undecaprenol N-acetylglucosamine transferase.